The chain runs to 262 residues: GTP cyclohydrolase FolE2 (262 aa).

It belongs to the GTP cyclohydrolase IV family.

It catalyses the reaction GTP + H2O = 7,8-dihydroneopterin 3'-triphosphate + formate + H(+). The protein operates within cofactor biosynthesis; 7,8-dihydroneopterin triphosphate biosynthesis; 7,8-dihydroneopterin triphosphate from GTP: step 1/1. Converts GTP to 7,8-dihydroneopterin triphosphate. This is GTP cyclohydrolase FolE2 from Dichelobacter nodosus (strain VCS1703A).